Here is a 76-residue protein sequence, read N- to C-terminus: UPF0235 protein MMAR_2910 (76 aa).

The protein belongs to the UPF0235 family.

This is UPF0235 protein MMAR_2910 from Mycobacterium marinum (strain ATCC BAA-535 / M).